The chain runs to 617 residues: Vacuolar protein sorting-associated protein 33B (617 aa).

A2 carries the N-acetylalanine modification.

It belongs to the STXBP/unc-18/SEC1 family. In terms of assembly, interacts with RAB11A and VIPAS39. Associates with adapter protein complex 3 (AP-3), clathrin:AP-3 and clathrin:HGS complexes. Post-translationally, phosphorylated on tyrosine residues.

The protein localises to the late endosome membrane. Its subcellular location is the lysosome membrane. The protein resides in the early endosome. It localises to the cytoplasmic vesicle. It is found in the clathrin-coated vesicle. The protein localises to the recycling endosome. Its function is as follows. May play a role in vesicle-mediated protein trafficking to lysosomal compartments and in membrane docking/fusion reactions of late endosomes/lysosomes. Required for proper trafficking and targeting of the collagen-modifying enzyme lysyl hydroxylase 3 (LH3) to intracellular collagen. Mediates phagolysosomal fusion in macrophages. Proposed to be involved in endosomal maturation implicating in part VIPAS39. In epithelial cells, the VPS33B:VIPAS39 complex may play a role in the apical RAB11A-dependentrecycling pathway and in the maintenance of the apical-basolateral polarity. Seems to be involved in the sorting of specific cargos from the trans-Golgi network to alpha-granule-destined multivesicular bodies (MVBs) promoting MVBs maturation in megakaryocytes. The polypeptide is Vacuolar protein sorting-associated protein 33B (Vps33b) (Mus musculus (Mouse)).